The primary structure comprises 298 residues: Ethanolamine ammonia-lyase small subunit (298 aa).

Adenosylcob(III)alamin is bound by residues Val-210, Glu-231, and Cys-261.

It belongs to the EutC family. As to quaternary structure, the basic unit is a heterodimer which dimerizes to form tetramers. The heterotetramers trimerize; 6 large subunits form a core ring with 6 small subunits projecting outwards. It depends on adenosylcob(III)alamin as a cofactor.

It localises to the bacterial microcompartment. The enzyme catalyses ethanolamine = acetaldehyde + NH4(+). It participates in amine and polyamine degradation; ethanolamine degradation. Its function is as follows. Catalyzes the deamination of various vicinal amino-alcohols to oxo compounds. Allows this organism to utilize ethanolamine as the sole source of nitrogen and carbon in the presence of external vitamin B12. The polypeptide is Ethanolamine ammonia-lyase small subunit (Salmonella heidelberg (strain SL476)).